The sequence spans 379 residues: Glucose-1-phosphate adenylyltransferase (379 aa).

Residues Gly164, 179–180 (EK), and Ser190 each bind alpha-D-glucose 1-phosphate.

The protein belongs to the bacterial/plant glucose-1-phosphate adenylyltransferase family. Homotetramer.

It catalyses the reaction alpha-D-glucose 1-phosphate + ATP + H(+) = ADP-alpha-D-glucose + diphosphate. It participates in glycan biosynthesis; glycogen biosynthesis. Involved in the biosynthesis of ADP-glucose, a building block required for the elongation reactions to produce glycogen. Catalyzes the reaction between ATP and alpha-D-glucose 1-phosphate (G1P) to produce pyrophosphate and ADP-Glc. In Streptococcus equi subsp. zooepidemicus (strain H70), this protein is Glucose-1-phosphate adenylyltransferase.